The chain runs to 451 residues: UPF0210 protein lin0538 (451 aa).

This sequence belongs to the UPF0210 family. Homodimer.

The protein is UPF0210 protein lin0538 of Listeria innocua serovar 6a (strain ATCC BAA-680 / CLIP 11262).